Reading from the N-terminus, the 352-residue chain is MNGTEGPFFYIPMVNTTGIVRSPYEYPQYYLVNPAAYACLGAYMFFLILVGFPVNFLTLYVTLEHKKLRTPLNYILLNLAVADLFMVFGGFTTTMYTSMHGYFVLGRLGCNIEGFFATLGGEIALWSLVVLAIERWVVVCKPISNFRFGENHAIMGVAFTWFMASACAVPPLVGWSRYIPEGMQCSCGVDYYTRAEGFNNESFVIYMFIVHFCIPLAVVGFCYGRLLCAVKEAAAAQQESETTQRAEREVSRMVVIMVIGFLVCWLPYASVAWYIFTHQGSEFGPPFMTVPAFFAKSSSIYNPMIYICMNKQFRHCMITTLCCGKNPFEEEEGASTTKTEASSVSSSSVSPA.

Residues 1–36 are Extracellular-facing; sequence MNGTEGPFFYIPMVNTTGIVRSPYEYPQYYLVNPAA. Asn2 and Asn15 each carry an N-linked (GlcNAc...) asparagine glycan. A helical membrane pass occupies residues 37-61; sequence YACLGAYMFFLILVGFPVNFLTLYV. The Cytoplasmic portion of the chain corresponds to 62-73; it reads TLEHKKLRTPLN. Residues 74–96 form a helical membrane-spanning segment; it reads YILLNLAVADLFMVFGGFTTTMY. At 97–110 the chain is on the extracellular side; that stretch reads TSMHGYFVLGRLGC. Cys110 and Cys187 form a disulfide bridge. Residues 111-133 traverse the membrane as a helical segment; it reads NIEGFFATLGGEIALWSLVVLAI. Positions 134-136 match the 'Ionic lock' involved in activated form stabilization motif; the sequence is ERW. Over 134–152 the chain is Cytoplasmic; it reads ERWVVVCKPISNFRFGENH. Residues 153-173 form a helical membrane-spanning segment; it reads AIMGVAFTWFMASACAVPPLV. The Extracellular portion of the chain corresponds to 174–202; sequence GWSRYIPEGMQCSCGVDYYTRAEGFNNES. Residue Asn200 is glycosylated (N-linked (GlcNAc...) asparagine). The chain crosses the membrane as a helical span at residues 203 to 224; the sequence is FVIYMFIVHFCIPLAVVGFCYG. Residues 225–252 are Cytoplasmic-facing; it reads RLLCAVKEAAAAQQESETTQRAEREVSR. Residues 253 to 274 traverse the membrane as a helical segment; the sequence is MVVIMVIGFLVCWLPYASVAWY. The Extracellular segment spans residues 275 to 286; the sequence is IFTHQGSEFGPP. Residues 287 to 308 traverse the membrane as a helical segment; it reads FMTVPAFFAKSSSIYNPMIYIC. Lys296 is subject to N6-(retinylidene)lysine. The Cytoplasmic segment spans residues 309 to 352; that stretch reads MNKQFRHCMITTLCCGKNPFEEEEGASTTKTEASSVSSSSVSPA. 2 S-palmitoyl cysteine lipidation sites follow: Cys322 and Cys323. A disordered region spans residues 331 to 352; the sequence is EEGASTTKTEASSVSSSSVSPA. The span at 342-352 shows a compositional bias: low complexity; that stretch reads SSVSSSSVSPA.

Belongs to the G-protein coupled receptor 1 family. Opsin subfamily. In terms of processing, phosphorylated on some or all of the serine and threonine residues present in the C-terminal region. Post-translationally, contains one covalently linked retinal chromophore.

It localises to the membrane. The protein localises to the cell projection. Its subcellular location is the cilium. It is found in the photoreceptor outer segment. Photoreceptor required for image-forming vision at low light intensity. While most salt water fish species use retinal as chromophore, most freshwater fish use 3-dehydroretinal, or a mixture of retinal and 3-dehydroretinal. Light-induced isomerization of 11-cis to all-trans retinal triggers a conformational change that activates signaling via G-proteins. Subsequent receptor phosphorylation mediates displacement of the bound G-protein alpha subunit by arrestin and terminates signaling. The polypeptide is Rhodopsin (rho) (Zosterisessor ophiocephalus (Grass goby)).